The chain runs to 241 residues: Pyridoxine 5'-phosphate synthase (241 aa).

Asn-10 lines the 3-amino-2-oxopropyl phosphate pocket. 12–13 contacts 1-deoxy-D-xylulose 5-phosphate; it reads DH. Arg-21 lines the 3-amino-2-oxopropyl phosphate pocket. The active-site Proton acceptor is the His-48. Arg-50 and His-55 together coordinate 1-deoxy-D-xylulose 5-phosphate. Catalysis depends on Glu-75, which acts as the Proton acceptor. Residue Thr-105 participates in 1-deoxy-D-xylulose 5-phosphate binding. His-195 functions as the Proton donor in the catalytic mechanism. 3-amino-2-oxopropyl phosphate-binding positions include Gly-196 and 217–218; that span reads GH.

This sequence belongs to the PNP synthase family. In terms of assembly, homooctamer; tetramer of dimers.

The protein localises to the cytoplasm. The enzyme catalyses 3-amino-2-oxopropyl phosphate + 1-deoxy-D-xylulose 5-phosphate = pyridoxine 5'-phosphate + phosphate + 2 H2O + H(+). The protein operates within cofactor biosynthesis; pyridoxine 5'-phosphate biosynthesis; pyridoxine 5'-phosphate from D-erythrose 4-phosphate: step 5/5. Catalyzes the complicated ring closure reaction between the two acyclic compounds 1-deoxy-D-xylulose-5-phosphate (DXP) and 3-amino-2-oxopropyl phosphate (1-amino-acetone-3-phosphate or AAP) to form pyridoxine 5'-phosphate (PNP) and inorganic phosphate. This Bdellovibrio bacteriovorus (strain ATCC 15356 / DSM 50701 / NCIMB 9529 / HD100) protein is Pyridoxine 5'-phosphate synthase.